The chain runs to 673 residues: Annexin A6 (673 aa).

The residue at position 2 (alanine 2) is an N-acetylalanine. The residue at position 13 (serine 13) is a Phosphoserine. Annexin repeat units follow at residues 20–91 (FNPS…GLMR), 92–163 (PPAY…VLLQ), 175–247 (DLVQ…AVVK), 251–322 (STAE…KLCG), 363–434 (FNPD…GLMM), 435–506 (PPAH…SLAT), 521–595 (EDAQ…AIVQ), and 599–670 (NKPL…AICG). Tyrosine 30 carries the post-translational modification Phosphotyrosine. 4 positions are modified to N6-acetyllysine: lysine 63, lysine 68, lysine 75, and lysine 81. Phosphotyrosine is present on tyrosine 201. An N6-acetyllysine mark is found at lysine 306, lysine 370, and lysine 418. At serine 422 the chain carries Phosphoserine. At lysine 483 the chain carries N6-acetyllysine. A Phosphoserine modification is found at serine 537. Residue lysine 620 is modified to N6-acetyllysine.

It belongs to the annexin family. In terms of processing, phosphorylated in response to growth factor stimulation.

The protein localises to the cytoplasm. It localises to the melanosome. Its function is as follows. May associate with CD21. May regulate the release of Ca(2+) from intracellular stores. In Bos taurus (Bovine), this protein is Annexin A6 (ANXA6).